The following is a 494-amino-acid chain: UPF0371 protein SUB1165 (494 aa).

This sequence belongs to the UPF0371 family.

The sequence is that of UPF0371 protein SUB1165 from Streptococcus uberis (strain ATCC BAA-854 / 0140J).